The following is a 761-amino-acid chain: Cytoplasmic export protein 1 (761 aa).

HEAT repeat units follow at residues 385–423 (IYPHFIQGLTDSDATLRLQTLKTIPCIVSCLTERQLNNE) and 498–534 (NTIANKILTVIAPGLLDKSPIVRGRAKILFEEYLEKL). 2 disordered regions span residues 660–692 (DDGWIQDESGPSKVPQKHTRPQNSTLAKSIAPS) and 714–761 (STVT…DTNW). Composition is skewed to polar residues over residues 680–692 (PQNSTLAKSIAPS) and 714–737 (STVTTKSSLSNKTARSKPISSIRG). Positions 747–761 (GWDDDGDSDSWDTNW) are enriched in acidic residues. Serine 754 carries the post-translational modification Phosphoserine.

In terms of assembly, associates with the nuclear pore complex (NPC). Interacts with GSP1, LOS1, MSN5, NUP116 and TEF2.

The protein localises to the cytoplasm. Component of the nuclear tRNA export machinery that my collect tRNA from the nuclear tRNA export receptors of the aminoacylation-dependent export and may deliver aminoacylated tRNAs to the translation machinery pathway at the nuclear pore complex. The sequence is that of Cytoplasmic export protein 1 (CEX1) from Saccharomyces cerevisiae (strain ATCC 204508 / S288c) (Baker's yeast).